A 424-amino-acid chain; its full sequence is Histidine--tRNA ligase (424 aa).

Belongs to the class-II aminoacyl-tRNA synthetase family. In terms of assembly, homodimer.

The protein resides in the cytoplasm. The catalysed reaction is tRNA(His) + L-histidine + ATP = L-histidyl-tRNA(His) + AMP + diphosphate + H(+). In Shewanella sediminis (strain HAW-EB3), this protein is Histidine--tRNA ligase.